The sequence spans 306 residues: tRNA pseudouridine synthase B (306 aa).

Asp-47 serves as the catalytic Nucleophile.

The protein belongs to the pseudouridine synthase TruB family. Type 1 subfamily.

The enzyme catalyses uridine(55) in tRNA = pseudouridine(55) in tRNA. Functionally, responsible for synthesis of pseudouridine from uracil-55 in the psi GC loop of transfer RNAs. In Neisseria gonorrhoeae (strain ATCC 700825 / FA 1090), this protein is tRNA pseudouridine synthase B.